The primary structure comprises 705 residues: Calpastatin (705 aa).

Disordered regions lie at residues 1 to 211 (MNPT…PNDA) and 226 to 493 (LTTC…PLPP). Basic and acidic residues-rich tracts occupy residues 7-17 (KAVKTEPEKKP) and 24-62 (VVHEKKTQEVKPKEHTEPKSLPKHSSDTGVKHAPKEKAV). K10 is covalently cross-linked (Glycyl lysine isopeptide (Lys-Gly) (interchain with G-Cter in SUMO2)). Position 28 is an N6-acetyllysine (K28). Low complexity-rich tracts occupy residues 63-72 (SKSSEQPPSE) and 94-103 (PAAAAAASAE). A Phosphoserine modification is found at S65. Phosphothreonine is present on T115. A compositionally biased stretch (acidic residues) spans 135 to 151 (TALDDLIDTLGEPEEMK). An Inhibitory domain 1 repeat occupies 149–202 (EMKEDNTTYTGPEVSDPMSSTYIEELGKRESTPPPKYKELLNKEEGIAGPPPDS). The segment covering 173–194 (ELGKRESTPPPKYKELLNKEEG) has biased composition (basic and acidic residues). A phosphoserine mark is found at S202 and S230. The span at 234 to 248 (DGKETEKEKSTEEAL) shows a compositional bias: basic and acidic residues. Residues 275–286 (TEQALQALSASL) show a composition bias toward polar residues. Basic and acidic residues-rich tracts occupy residues 289–317 (RKPEPELDPSSIREVDEAKAKEEKVKKCG) and 327–352 (YRLKPATDKDGKPLLPEAEEKPKPLS). An Inhibitory domain 2 repeat occupies 292-344 (EPELDPSSIREVDEAKAKEEKVKKCGEDEETVPSEYRLKPATDKDGKPLLPEA). 3 positions are modified to phosphoserine: S352, S354, and S361. The segment covering 355–364 (ELIDELSEDF) has biased composition (acidic residues). Positions 365–381 (DQSKPTEKQSKPTEKTE) are enriched in basic and acidic residues. Position 428 is a phosphoserine (S428). Basic and acidic residues predominate over residues 430 to 489 (PKKEADPEDGKPVEDKVKEKAKEEDRENFGEKEETIPPDYRLEEAKDKDGKPLLPKEVKE). Residues 434-487 (ADPEDGKPVEDKVKEKAKEEDRENFGEKEETIPPDYRLEEAKDKDGKPLLPKEV) form an Inhibitory domain 3 repeat. Phosphoserine is present on residues S504 and S515. Positions 527–705 (VSEVVSQTPA…KPKADGKSTS (179 aa)) are disordered. Over residues 533 to 542 (QTPAPTTQAA) the composition is skewed to low complexity. Position 563 is a phosphoserine (S563). The stretch at 571–624 (PDPDENKPVEDKVKEKAKAEHRDKLGERDDTIPPKYQHLLDDNKEGTPGKPKDQ) is one Inhibitory domain 4 repeat. Residues 571–625 (PDPDENKPVEDKVKEKAKAEHRDKLGERDDTIPPKYQHLLDDNKEGTPGKPKDQR) are compositionally biased toward basic and acidic residues. Residues 651-662 (DSCPSTTETSTD) show a composition bias toward low complexity. Residues 683–705 (KAKDSTKAKEETSKPKADGKSTS) show a composition bias toward basic and acidic residues.

Belongs to the protease inhibitor I27 (calpastatin) family.

Functionally, specific inhibition of calpain (calcium-dependent cysteine protease). Plays a key role in postmortem tenderization of meat and have been proposed to be involved in muscle protein degradation in living tissue. The protein is Calpastatin (CAST) of Bos taurus (Bovine).